Here is a 175-residue protein sequence, read N- to C-terminus: uncharacterized protein (175 aa).

The signal sequence occupies residues 1 to 23 (MILVLLLILIAFLYIYFPSSLNQ).

This is an uncharacterized protein from Invertebrate iridescent virus 6 (IIV-6).